The following is a 329-amino-acid chain: Glucosyl-3-phosphoglycerate synthase (329 aa).

Residues 55-59, Ser86, Lys119, and 139-141 each bind UDP-alpha-D-glucose; these read PALDE and DSD. Asp141 contacts Mn(2+). A (2R)-3-phosphoglycerate-binding site is contributed by 189–192; it reads GRVT. Residue 234–237 coordinates UDP-alpha-D-glucose; the sequence is YGVE. His263 contributes to the Mn(2+) binding site. (2R)-3-phosphoglycerate is bound at residue Asn265.

It belongs to the glycosyltransferase 2 family. As to quaternary structure, homodimer. Requires Mg(2+) as cofactor. The cofactor is Mn(2+).

It catalyses the reaction an NDP-alpha-D-glucose + (2R)-3-phosphoglycerate = (2R)-2-O-(alpha-D-glucopyranosyl)-3-phospho-glycerate + a ribonucleoside 5'-diphosphate + H(+). It carries out the reaction (2R)-3-phosphoglycerate + UDP-alpha-D-glucose = (2R)-2-O-(alpha-D-glucopyranosyl)-3-phospho-glycerate + UDP + H(+). The enzyme catalyses GDP-D-glucose + (2R)-3-phosphoglycerate = (2R)-2-O-(alpha-D-glucopyranosyl)-3-phospho-glycerate + GDP + H(+). In terms of biological role, involved in the biosynthesis of 6-O-methylglucose lipopolysaccarides (MGLPs). Catalyzes the transfer of the glucose moiety from UDP-alpha-D-glucose (UDP-Glc) to the position 2 of 3-phospho-D-glycerate (3-PGA) to form glucosyl-3-phosphoglycerate (GPG). To a lesser extent can also use GDP-Glc but not UDP-Gal or UDP-GlcNAc as the sugar donor. This is Glucosyl-3-phosphoglycerate synthase from Mycolicibacterium paratuberculosis (strain ATCC BAA-968 / K-10) (Mycobacterium paratuberculosis).